The chain runs to 336 residues: Biotin synthase (336 aa).

One can recognise a Radical SAM core domain in the interval N54 to R281. [4Fe-4S] cluster is bound by residues C69, C73, and C76. Positions 113, 144, 204, and 276 each coordinate [2Fe-2S] cluster.

This sequence belongs to the radical SAM superfamily. Biotin synthase family. As to quaternary structure, homodimer. It depends on [4Fe-4S] cluster as a cofactor. [2Fe-2S] cluster serves as cofactor.

The enzyme catalyses (4R,5S)-dethiobiotin + (sulfur carrier)-SH + 2 reduced [2Fe-2S]-[ferredoxin] + 2 S-adenosyl-L-methionine = (sulfur carrier)-H + biotin + 2 5'-deoxyadenosine + 2 L-methionine + 2 oxidized [2Fe-2S]-[ferredoxin]. It participates in cofactor biosynthesis; biotin biosynthesis; biotin from 7,8-diaminononanoate: step 2/2. Catalyzes the conversion of dethiobiotin (DTB) to biotin by the insertion of a sulfur atom into dethiobiotin via a radical-based mechanism. The chain is Biotin synthase from Burkholderia pseudomallei (strain 1106a).